The following is a 673-amino-acid chain: DNA ligase (673 aa).

NAD(+) is bound by residues Asp34–Asp38, Ser83–Leu84, and Glu116. The active-site N6-AMP-lysine intermediate is the Lys118. Arg139, Glu176, Lys293, and Lys317 together coordinate NAD(+). Residues Cys411, Cys414, Cys429, and Cys435 each coordinate Zn(2+). A BRCT domain is found at Asn595–Ser673.

It belongs to the NAD-dependent DNA ligase family. LigA subfamily. Mg(2+) is required as a cofactor. Mn(2+) serves as cofactor.

The catalysed reaction is NAD(+) + (deoxyribonucleotide)n-3'-hydroxyl + 5'-phospho-(deoxyribonucleotide)m = (deoxyribonucleotide)n+m + AMP + beta-nicotinamide D-nucleotide.. Its function is as follows. DNA ligase that catalyzes the formation of phosphodiester linkages between 5'-phosphoryl and 3'-hydroxyl groups in double-stranded DNA using NAD as a coenzyme and as the energy source for the reaction. It is essential for DNA replication and repair of damaged DNA. The chain is DNA ligase from Legionella pneumophila (strain Corby).